A 251-amino-acid polypeptide reads, in one-letter code: 3-deoxy-manno-octulosonate cytidylyltransferase (251 aa).

Belongs to the KdsB family.

It is found in the cytoplasm. It carries out the reaction 3-deoxy-alpha-D-manno-oct-2-ulosonate + CTP = CMP-3-deoxy-beta-D-manno-octulosonate + diphosphate. Its pathway is nucleotide-sugar biosynthesis; CMP-3-deoxy-D-manno-octulosonate biosynthesis; CMP-3-deoxy-D-manno-octulosonate from 3-deoxy-D-manno-octulosonate and CTP: step 1/1. It functions in the pathway bacterial outer membrane biogenesis; lipopolysaccharide biosynthesis. Functionally, activates KDO (a required 8-carbon sugar) for incorporation into bacterial lipopolysaccharide in Gram-negative bacteria. This chain is 3-deoxy-manno-octulosonate cytidylyltransferase, found in Alcanivorax borkumensis (strain ATCC 700651 / DSM 11573 / NCIMB 13689 / SK2).